The sequence spans 553 residues: CTP synthase (553 aa).

The tract at residues 1–266 is amidoligase domain; that stretch reads MTKNYIFITG…DNYICEYFKL (266 aa). S14 contributes to the CTP binding site. Position 14 (S14) interacts with UTP. Residues 15 to 20 and D72 contribute to the ATP site; that span reads SLGKGI. Residues D72 and E140 each contribute to the Mg(2+) site. CTP contacts are provided by residues 147 to 149, 187 to 192, and K223; these read DIE and KTKPTQ. UTP-binding positions include 187-192 and K223; that span reads KTKPTQ. 239–241 provides a ligand contact to ATP; it reads KDV. Residues 291–544 form the Glutamine amidotransferase type-1 domain; the sequence is IIGIIGKYIK…IKSAKKNKKN (254 aa). L-glutamine is bound at residue G352. C379 (nucleophile; for glutamine hydrolysis) is an active-site residue. Residues 380 to 383, E403, and R472 each bind L-glutamine; that span reads LGMQ. Residues H517 and E519 contribute to the active site.

It belongs to the CTP synthase family. In terms of assembly, homotetramer.

The enzyme catalyses UTP + L-glutamine + ATP + H2O = CTP + L-glutamate + ADP + phosphate + 2 H(+). It catalyses the reaction L-glutamine + H2O = L-glutamate + NH4(+). The catalysed reaction is UTP + NH4(+) + ATP = CTP + ADP + phosphate + 2 H(+). It participates in pyrimidine metabolism; CTP biosynthesis via de novo pathway; CTP from UDP: step 2/2. Allosterically activated by GTP, when glutamine is the substrate; GTP has no effect on the reaction when ammonia is the substrate. The allosteric effector GTP functions by stabilizing the protein conformation that binds the tetrahedral intermediate(s) formed during glutamine hydrolysis. Inhibited by the product CTP, via allosteric rather than competitive inhibition. Catalyzes the ATP-dependent amination of UTP to CTP with either L-glutamine or ammonia as the source of nitrogen. Regulates intracellular CTP levels through interactions with the four ribonucleotide triphosphates. This Buchnera aphidicola subsp. Schizaphis graminum (strain Sg) protein is CTP synthase.